The following is a 343-amino-acid chain: UPF0284 protein Msed_0735 (343 aa).

The protein belongs to the UPF0284 family.

The sequence is that of UPF0284 protein Msed_0735 from Metallosphaera sedula (strain ATCC 51363 / DSM 5348 / JCM 9185 / NBRC 15509 / TH2).